The sequence spans 306 residues: UDP-3-O-acyl-N-acetylglucosamine deacetylase (306 aa).

Zn(2+) contacts are provided by histidine 79, histidine 238, and aspartate 242. Histidine 265 acts as the Proton donor in catalysis.

Belongs to the LpxC family. Zn(2+) serves as cofactor.

It carries out the reaction a UDP-3-O-[(3R)-3-hydroxyacyl]-N-acetyl-alpha-D-glucosamine + H2O = a UDP-3-O-[(3R)-3-hydroxyacyl]-alpha-D-glucosamine + acetate. Its pathway is glycolipid biosynthesis; lipid IV(A) biosynthesis; lipid IV(A) from (3R)-3-hydroxytetradecanoyl-[acyl-carrier-protein] and UDP-N-acetyl-alpha-D-glucosamine: step 2/6. In terms of biological role, catalyzes the hydrolysis of UDP-3-O-myristoyl-N-acetylglucosamine to form UDP-3-O-myristoylglucosamine and acetate, the committed step in lipid A biosynthesis. This Shewanella sp. (strain ANA-3) protein is UDP-3-O-acyl-N-acetylglucosamine deacetylase.